The following is a 376-amino-acid chain: Succinyl-diaminopimelate desuccinylase (376 aa).

Zn(2+) is bound at residue histidine 66. Aspartate 68 is an active-site residue. Aspartate 99 contributes to the Zn(2+) binding site. Glutamate 133 functions as the Proton acceptor in the catalytic mechanism. Zn(2+) is bound by residues glutamate 134, glutamate 162, and histidine 348.

This sequence belongs to the peptidase M20A family. DapE subfamily. Homodimer. It depends on Zn(2+) as a cofactor. Requires Co(2+) as cofactor.

The enzyme catalyses N-succinyl-(2S,6S)-2,6-diaminopimelate + H2O = (2S,6S)-2,6-diaminopimelate + succinate. Its pathway is amino-acid biosynthesis; L-lysine biosynthesis via DAP pathway; LL-2,6-diaminopimelate from (S)-tetrahydrodipicolinate (succinylase route): step 3/3. Catalyzes the hydrolysis of N-succinyl-L,L-diaminopimelic acid (SDAP), forming succinate and LL-2,6-diaminopimelate (DAP), an intermediate involved in the bacterial biosynthesis of lysine and meso-diaminopimelic acid, an essential component of bacterial cell walls. In Xanthomonas oryzae pv. oryzae (strain PXO99A), this protein is Succinyl-diaminopimelate desuccinylase.